The chain runs to 302 residues: Bacteriochlorophyll synthase 33 kDa chain (302 aa).

The next 9 membrane-spanning stretches (helical) occupy residues 25 to 45 (ITWF…GIWP), 49 to 69 (WPLV…MSQA), 97 to 117 (WGLY…WMLG), 119 to 139 (WGFG…VEPI), 145 to 165 (GWWG…FTGA), 166 to 186 (AVLS…LYAF), 223 to 243 (LACT…VIWG), 246 to 266 (IHAG…RVLL), and 275 to 295 (WYNG…AFAI).

The protein resides in the cell membrane. It participates in porphyrin-containing compound metabolism; bacteriochlorophyll biosynthesis (light-independent). Catalyzes the esterification of bacteriochlorophyllide a by geranylgeraniol-PPi. In Cereibacter sphaeroides (strain ATCC 17023 / DSM 158 / JCM 6121 / CCUG 31486 / LMG 2827 / NBRC 12203 / NCIMB 8253 / ATH 2.4.1.) (Rhodobacter sphaeroides), this protein is Bacteriochlorophyll synthase 33 kDa chain (bchG).